Reading from the N-terminus, the 446-residue chain is Tetratricopeptide repeat protein 23 (446 aa).

TPR repeat units lie at residues 45-78 (LHLCEERAKSYSSIREYKQAIQELVRCVALTKIC), 137-170 (LELFYTLGKALVSLQKFKEAWENLIKAERLSKEM), 186-219 (SRIKLSFAQLYQGQKRSKEAFPYYQKALEYTETT), and 356-389 (AETYRILGRADLAQGNNNGAHMKLKKCVQIETFL).

Associated with the EvC complex composed of EFCAB7, IQCE, EVC2 and EVC.

The protein localises to the cell projection. It is found in the cilium. Functionally, participates positively in the ciliary Hedgehog (Hh) signaling. This is Tetratricopeptide repeat protein 23 (Ttc23) from Rattus norvegicus (Rat).